A 197-amino-acid polypeptide reads, in one-letter code: MDLITQLQDKLDHLLYVFGTCIGVLQRDAPPSFFNNPQNQQQQQQQQQQQQQQQQQQQQQQNPQTQQQLPPPPPPPPQQQQQQQQQQQQQQQQQQQQQQQQPQPTEEWDAPSKMALQVIETSKVIESYIEKLPGFDKTEDQQYEDLKNLNTQSKQVSNELLSSRRDAIELLKMVKESILYISEESKNEEIDQQPMQQ.

Positions 29–110 (APPSFFNNPQ…QPQPTEEWDA (82 aa)) are disordered. Residues 37-68 (PQNQQQQQQQQQQQQQQQQQQQQQQNPQTQQQ) are compositionally biased toward low complexity. Residues 38-101 (QNQQQQQQQQ…QQQQQQQQQQ (64 aa)) adopt a coiled-coil conformation. Positions 69-78 (LPPPPPPPPQ) are enriched in pro residues. Residues 79–104 (QQQQQQQQQQQQQQQQQQQQQQQPQP) show a composition bias toward low complexity.

The protein belongs to the Mediator complex subunit 21 family. In terms of assembly, component of the Mediator complex.

It is found in the nucleus. Its function is as follows. Component of the Mediator complex, a coactivator involved in the regulated transcription of nearly all RNA polymerase II-dependent genes. Mediator functions as a bridge to convey information from gene-specific regulatory proteins to the basal RNA polymerase II transcription machinery. Mediator is recruited to promoters by direct interactions with regulatory proteins and serves as a scaffold for the assembly of a functional preinitiation complex with RNA polymerase II and the general transcription factors. The chain is Putative mediator of RNA polymerase II transcription subunit 21 (med21) from Dictyostelium discoideum (Social amoeba).